The following is a 550-amino-acid chain: Leucine-rich repeat, immunoglobulin-like domain and transmembrane domain-containing protein 2 (550 aa).

The N-terminal stretch at 1 to 19 (MASVFHYFLLVLVFLDTHA) is a signal peptide. The region spanning 23–54 (FCLPGCTCSEESFGRTLQCTSVSLGKIPGNLS) is the LRRNT domain. The N-linked (GlcNAc...) asparagine glycan is linked to asparagine 52. 4 LRR repeats span residues 80–103 (TLEY…EHLP), 104–125 (ELRE…AFRA), 128–149 (LLRV…ALQF), and 152–173 (SLTY…VFLN). The LRRCT domain occupies 200 to 252 (NPWVCDCRLRGLVQFVKSITLPVILVNSYLICQGPLSKAGQLFHETELSACMK). One can recognise an Ig-like domain in the interval 253–341 (PQISTPSANI…SIGKSNLVIS (89 aa)). Cysteine 274 and cysteine 327 are oxidised to a cystine. The Fibronectin type-III domain occupies 361–451 (EGNAYIDLRV…QGQCVAFVTG (91 aa)). Residues 466–486 (VTVVLCVVLLAVPVGAYAWAA) traverse the membrane as a helical segment. Residues 508 to 550 (SCTPAAPQSKDGSFREHPAVCDDGEGHIDTEGDKEKGGTEDNS) are disordered. A compositionally biased stretch (basic and acidic residues) spans 519 to 550 (GSFREHPAVCDDGEGHIDTEGDKEKGGTEDNS).

In terms of assembly, interacts with LRIT1; may form a heterodimer with LRIT1.

It localises to the membrane. This Homo sapiens (Human) protein is Leucine-rich repeat, immunoglobulin-like domain and transmembrane domain-containing protein 2 (LRIT2).